The primary structure comprises 374 residues: Ribosomal RNA large subunit methyltransferase M (374 aa).

Residues S188, 221 to 224 (CPGG), D240, D260, and D276 each bind S-adenosyl-L-methionine. K305 functions as the Proton acceptor in the catalytic mechanism.

It belongs to the class I-like SAM-binding methyltransferase superfamily. RNA methyltransferase RlmE family. RlmM subfamily. As to quaternary structure, monomer.

The protein resides in the cytoplasm. It catalyses the reaction cytidine(2498) in 23S rRNA + S-adenosyl-L-methionine = 2'-O-methylcytidine(2498) in 23S rRNA + S-adenosyl-L-homocysteine + H(+). In terms of biological role, catalyzes the 2'-O-methylation at nucleotide C2498 in 23S rRNA. The protein is Ribosomal RNA large subunit methyltransferase M of Edwardsiella ictaluri (strain 93-146).